Here is a 410-residue protein sequence, read N- to C-terminus: Dipeptidase 1 (410 aa).

A signal peptide spans 1 to 16 (MVIIWWFWSLLAICAS). 2 residues coordinate Zn(2+): H36 and D38. An intrachain disulfide couples C87 to C170. N121 is a glycosylation site (N-linked (GlcNAc...) asparagine). Residue E141 participates in Zn(2+) binding. H168 provides a ligand contact to substrate. The Zn(2+) site is built by H214 and H235. Residues C242 and C274 are joined by a disulfide bond. R246 contributes to the substrate binding site. N258 carries an N-linked (GlcNAc...) asparagine glycan. D304 lines the substrate pocket. A glycan (N-linked (GlcNAc...) asparagine) is linked at N332. S384 is lipidated: GPI-anchor amidated serine. A propeptide spans 385-410 (QAHSIHLQTGALVASLASLLFRLHLL) (removed in mature form).

The protein belongs to the metallo-dependent hydrolases superfamily. Peptidase M19 family. Homodimer; disulfide-linked. It depends on Zn(2+) as a cofactor. Expressed in heart, lung, skeletal muscle, kidney, liver, and testis. Not detected in brain and spleen.

It localises to the apical cell membrane. The protein resides in the cell projection. The protein localises to the microvillus membrane. It carries out the reaction an L-aminoacyl-L-amino acid + H2O = 2 an L-alpha-amino acid. It catalyses the reaction leukotriene D4 + H2O = leukotriene E4 + glycine. The enzyme catalyses L-cystine-bis-glycine + 2 H2O = L-cystine + 2 glycine. The catalysed reaction is a beta-lactam + H2O = a substituted beta-amino acid. It carries out the reaction glycyldehydrophenylalanine + H2O = 2,3-didehydrophenylalanine + glycine. Inhibited by L-penicillamine. Inhibited by cilastatin. Functionally, hydrolyzes a wide range of dipeptides including the conversion of leukotriene D4 to leukotriene E4. Hydrolyzes cystinyl-bis-glycine (cys-bis-gly) formed during glutathione degradation. Also possesses beta lactamase activity and hydrolytically inactivates beta-lactam antibiotics. Its function is as follows. Independently of its dipeptidase activity, acts as an adhesion receptor for neutrophil recruitment from bloodstream into inflamed lungs and liver. The polypeptide is Dipeptidase 1 (Dpep1) (Mus musculus (Mouse)).